The primary structure comprises 205 residues: Small ribosomal subunit protein uS4 (205 aa).

The span at 1 to 16 (MSKRESSKYKIDRRMG) shows a compositional bias: basic and acidic residues. The segment at 1–46 (MSKRESSKYKIDRRMGENIWGRPKSPVNRREYGPGQHGQRRKGKLS) is disordered. Residues 94 to 157 (SRLDAIVYRA…KQLVIVLEAV (64 aa)) form the S4 RNA-binding domain.

This sequence belongs to the universal ribosomal protein uS4 family. As to quaternary structure, part of the 30S ribosomal subunit. Contacts protein S5. The interaction surface between S4 and S5 is involved in control of translational fidelity.

Functionally, one of the primary rRNA binding proteins, it binds directly to 16S rRNA where it nucleates assembly of the body of the 30S subunit. With S5 and S12 plays an important role in translational accuracy. The protein is Small ribosomal subunit protein uS4 of Rhizobium leguminosarum bv. trifolii (strain WSM2304).